The sequence spans 139 residues: Bilirubin-inducible fluorescent protein UnaG (139 aa).

Residues asparagine 57, threonine 61, serine 80, arginine 112, and 132 to 134 (RSY) each bind (4Z,15Z)-bilirubin IXalpha.

This sequence belongs to the calycin superfamily. Fatty-acid binding protein (FABP) family. In terms of assembly, monomer. In terms of tissue distribution, detected in small-diameter muscle fibers from the white muscle layer from juvenile animals (glass eels) (at protein level). Detected in small-diameter muscle fibers from juvenile animals (glass eels).

It localises to the cytoplasm. Its function is as follows. Beta-barrel protein that binds unconjugated bilirubin with high affinity. Excitation of the bilirubin-bound protein gives rise to green fluorescence, both under normoxia and hypoxia. The apoprotein is not fluorescent. Does not emit fluorescence in the presence of ditauro-bilirubin, urobilin or biliverdin. The protein is Bilirubin-inducible fluorescent protein UnaG of Anguilla japonica (Japanese eel).